Here is a 202-residue protein sequence, read N- to C-terminus: Dephospho-CoA kinase (202 aa).

The 198-residue stretch at 5 to 202 folds into the DPCK domain; that stretch reads VIGLTGGIGS…KKYLTLTKMV (198 aa). 13–18 contacts ATP; the sequence is GSGKTT.

This sequence belongs to the CoaE family.

It localises to the cytoplasm. The enzyme catalyses 3'-dephospho-CoA + ATP = ADP + CoA + H(+). It functions in the pathway cofactor biosynthesis; coenzyme A biosynthesis; CoA from (R)-pantothenate: step 5/5. Its function is as follows. Catalyzes the phosphorylation of the 3'-hydroxyl group of dephosphocoenzyme A to form coenzyme A. In Colwellia psychrerythraea (strain 34H / ATCC BAA-681) (Vibrio psychroerythus), this protein is Dephospho-CoA kinase.